A 336-amino-acid chain; its full sequence is Potassium channel subfamily K member 1 (336 aa).

At 1–20 the chain is on the cytoplasmic side; it reads MLQSLAGSSCVRLVERHRSA. A helical membrane pass occupies residues 21-41; sequence WCFGFLVLGYLLYLVFGAVVF. Over 42–103 the chain is Extracellular; sequence SSVELPYEDL…SNASGNWNWD (62 aa). Asn95 carries N-linked (GlcNAc...) asparagine glycosylation. Positions 104–116 form an intramembrane region, helical; that stretch reads FTSALFFASTVLS. Residues 117–122 lie within the membrane without spanning it; sequence TTGYGH. Positions 117-122 are selectivity filter 1; it reads TTGYGH. Topologically, residues 123–132 are extracellular; it reads TVPLSDGGKA. A helical transmembrane segment spans residues 133–156; that stretch reads FCIIYSVIGIPFTLLFLTAVVQRV. Topologically, residues 157–181 are cytoplasmic; it reads TIHVTRRPVLYFHVRWGFSKQAVAI. Residues 182–202 traverse the membrane as a helical segment; that stretch reads VHAVLLGVVTVSCFFFIPAAV. At 203 to 211 the chain is on the extracellular side; sequence FSVLEDDWN. The segment at residues 212–224 is an intramembrane region (helical); that stretch reads FLESFYFCFISLS. Residues 225–230 form a selectivity filter 2 region; it reads TIGLGD. An intramembrane segment occupies 225-231; it reads TIGLGDY. The Extracellular segment spans residues 232-243; that stretch reads VPGEGYNQKFRE. Residues 244–267 form a helical membrane-spanning segment; that stretch reads LYKIGITCYLLLGLIAMLVVLETF. Residues 268–336 lie on the Cytoplasmic side of the membrane; sequence CELHELKKFR…PALADGASDH (69 aa). Lys274 participates in a covalent cross-link: Glycyl lysine isopeptide (Lys-Gly) (interchain with G-Cter in SUMO). Residues 293-299 are important for intracellular retention in recycling endosomes; that stretch reads IIEHDQL. The tract at residues 307–336 is disordered; the sequence is QAAGVQEDQKQNEPFVSPQPPALADGASDH.

It belongs to the two pore domain potassium channel (TC 1.A.1.8) family. In terms of assembly, homodimer; disulfide-linked. Heterodimer with KCNK2; disulfide-linked. In astrocytes, forms mostly heterodimeric potassium channels with KCNK2, with only a minor proportion of functional channels containing homodimeric KCNK1. Interacts with KCNK3 and KCNK9, forming functional heterodimeric channels. Interacts with GNG4. Identified in a complex with PSD and ARF6; interacts only with PSD that is bound to ARF6. Interacts with UBE2I. Post-translationally, sumoylation is controversial. Sumoylated by UBE2I. Not sumoylated when expressed in xenopus oocytes or mammalian cells. Sumoylation inactivates the channel, but does not interfere with expression at the cell membrane. Sumoylation of a single subunit is sufficient to silence the dimeric channel. Sumoylation of KCNK1 is sufficient to silence heterodimeric channels formed by KCNK1 and KCNK3 or KCNK9. Desumoylated by SENP1; this activates the channel. Desumoylated by SENP1; this strongly increases halothane-mediated activation of heterodimeric channels formed with KCNK9. SENP1 treatment has no effect.

It is found in the cell membrane. Its subcellular location is the recycling endosome. It localises to the synaptic cell membrane. The protein resides in the cytoplasmic vesicle. The protein localises to the perikaryon. It is found in the cell projection. Its subcellular location is the dendrite. It localises to the apical cell membrane. It catalyses the reaction K(+)(in) = K(+)(out). The catalysed reaction is NH4(+)(in) = NH4(+)(out). It carries out the reaction Na(+)(in) = Na(+)(out). The enzyme catalyses Rb(+)(in) = Rb(+)(out). It catalyses the reaction Cs(+)(in) = Cs(+)(out). The catalysed reaction is Li(+)(in) = Li(+)(out). It carries out the reaction L-glutamate(out) = L-glutamate(in). The enzyme catalyses chloride(in) = chloride(out). In terms of biological role, ion channel that contributes to passive transmembrane potassium transport and to the regulation of the resting membrane potential in brain astrocytes, but also in kidney and in other tissues. Forms dimeric channels through which potassium ions pass in accordance with their electrochemical gradient. The channel is selective for K(+) ions at physiological potassium concentrations and at neutral pH, but becomes permeable to Na(+) at subphysiological K(+) levels and upon acidification of the extracellular medium. The homodimer has very low potassium channel activity, when expressed in heterologous systems, and can function as weakly inward rectifying potassium channel. Channel activity is modulated by activation of serotonin receptors. Heterodimeric channels containing KCNK1 and KCNK2 have much higher activity, and may represent the predominant form in astrocytes. Heterodimeric channels containing KCNK1 and KCNK3 or KCNK9 have much higher activity. Heterodimeric channels formed by KCNK1 and KCNK9 may contribute to halothane-sensitive currents. Mediates outward rectifying potassium currents in dentate gyrus granule cells and contributes to the regulation of their resting membrane potential. Contributes to the regulation of action potential firing in dentate gyrus granule cells and down-regulates their intrinsic excitability. In astrocytes, the heterodimer formed by KCNK1 and KCNK2 is required for rapid glutamate release in response to activation of G-protein coupled receptors, such as F2R and CNR1. Required for normal ion and water transport in the kidney. Contributes to the regulation of the resting membrane potential of pancreatic beta cells. The low channel activity of homodimeric KCNK1 may be due to sumoylation. The low channel activity may be due to rapid internalization from the cell membrane and retention in recycling endosomes. Permeable to monovalent cations with ion selectivity for K(+) &gt; Rb(+) &gt;&gt; NH4(+) &gt;&gt; Cs(+) = Na(+) = Li(+). The polypeptide is Potassium channel subfamily K member 1 (Bos taurus (Bovine)).